The primary structure comprises 367 residues: 2-aminoethylphosphonate--pyruvate transaminase (367 aa).

K194 bears the N6-(pyridoxal phosphate)lysine mark.

Belongs to the class-V pyridoxal-phosphate-dependent aminotransferase family. PhnW subfamily. Homodimer. It depends on pyridoxal 5'-phosphate as a cofactor.

The catalysed reaction is (2-aminoethyl)phosphonate + pyruvate = phosphonoacetaldehyde + L-alanine. Involved in phosphonate degradation. The protein is 2-aminoethylphosphonate--pyruvate transaminase of Salmonella paratyphi B (strain ATCC BAA-1250 / SPB7).